The chain runs to 313 residues: Olfactory receptor 8C8 (313 aa).

At methionine 1–glutamine 27 the chain is on the extracellular side. Residue asparagine 8 is glycosylated (N-linked (GlcNAc...) asparagine). The chain crosses the membrane as a helical span at residues leucine 28–leucine 48. The Cytoplasmic segment spans residues methionine 49–histidine 59. A helical membrane pass occupies residues threonine 60–phenylalanine 80. The Extracellular portion of the chain corresponds to threonine 81–serine 96. A helical transmembrane segment spans residues phenylalanine 97–valine 117. Cysteine 100 and cysteine 192 are joined by a disulfide. At leucine 118–lysine 136 the chain is on the cytoplasmic side. A helical membrane pass occupies residues valine 137 to alanine 157. Residues serine 158–serine 208 lie on the Extracellular side of the membrane. A helical transmembrane segment spans residues alanine 209 to isoleucine 229. Over histidine 230–lysine 239 the chain is Cytoplasmic. The chain crosses the membrane as a helical span at residues alanine 240 to leucine 260. The Extracellular portion of the chain corresponds to alanine 261–glycine 274. The helical transmembrane segment at lysine 275 to leucine 295 threads the bilayer. The Cytoplasmic segment spans residues arginine 296–serine 313.

This sequence belongs to the G-protein coupled receptor 1 family. As to expression, expressed in neurons in the olfactory epithelium.

The protein resides in the cell membrane. Potential odorant receptor. The polypeptide is Olfactory receptor 8C8 (Mus musculus (Mouse)).